Consider the following 557-residue polypeptide: 2-succinyl-5-enolpyruvyl-6-hydroxy-3-cyclohexene-1-carboxylate synthase (557 aa).

It belongs to the TPP enzyme family. MenD subfamily. Homodimer. It depends on Mg(2+) as a cofactor. Mn(2+) is required as a cofactor. The cofactor is thiamine diphosphate.

The enzyme catalyses isochorismate + 2-oxoglutarate + H(+) = 5-enolpyruvoyl-6-hydroxy-2-succinyl-cyclohex-3-ene-1-carboxylate + CO2. It participates in quinol/quinone metabolism; 1,4-dihydroxy-2-naphthoate biosynthesis; 1,4-dihydroxy-2-naphthoate from chorismate: step 2/7. Its pathway is quinol/quinone metabolism; menaquinone biosynthesis. In terms of biological role, catalyzes the thiamine diphosphate-dependent decarboxylation of 2-oxoglutarate and the subsequent addition of the resulting succinic semialdehyde-thiamine pyrophosphate anion to isochorismate to yield 2-succinyl-5-enolpyruvyl-6-hydroxy-3-cyclohexene-1-carboxylate (SEPHCHC). The sequence is that of 2-succinyl-5-enolpyruvyl-6-hydroxy-3-cyclohexene-1-carboxylate synthase from Staphylococcus aureus (strain MRSA252).